The following is a 606-amino-acid chain: Phosphomethylpyrimidine synthase (606 aa).

Positions E84–I103 are disordered. Substrate is bound by residues N209, M238, Y267, H303, S323–G325, D364–R367, and E403. H407 contacts Zn(2+). Y430 is a substrate binding site. H471 contacts Zn(2+). Residues C551, C554, and C559 each contribute to the [4Fe-4S] cluster site.

The protein belongs to the ThiC family. In terms of assembly, homodimer. Requires [4Fe-4S] cluster as cofactor.

It carries out the reaction 5-amino-1-(5-phospho-beta-D-ribosyl)imidazole + S-adenosyl-L-methionine = 4-amino-2-methyl-5-(phosphooxymethyl)pyrimidine + CO + 5'-deoxyadenosine + formate + L-methionine + 3 H(+). It functions in the pathway cofactor biosynthesis; thiamine diphosphate biosynthesis. Its function is as follows. Catalyzes the synthesis of the hydroxymethylpyrimidine phosphate (HMP-P) moiety of thiamine from aminoimidazole ribotide (AIR) in a radical S-adenosyl-L-methionine (SAM)-dependent reaction. The sequence is that of Phosphomethylpyrimidine synthase from Bartonella tribocorum (strain CIP 105476 / IBS 506).